Consider the following 305-residue polypeptide: Protein hrde-2 (305 aa).

Disordered regions lie at residues 211–233 (AEMV…PVPA) and 267–305 (EMSN…EYCQ). Over residues 215 to 227 (PSNTTGSSGSPMS) the composition is skewed to polar residues. Acidic residues predominate over residues 268 to 287 (MSNDEYSPDESENDENEYDY). Over residues 289-305 (NAARYDDGYDEGHEYCQ) the composition is skewed to basic and acidic residues.

Expressed throughout the male and female germline.

The protein resides in the nucleus. Plays a role in germline RNA interference (RNAi), and in particular is required for piwi-interacting RNA (piRNA) gene silencing. Facilitates the binding of the argonaut protein hrde-1 to small interfering RNAs (siRNAs) targets that are required for transgenerational epigenetic inheritance and germline immortality. The sequence is that of Protein hrde-2 from Caenorhabditis elegans.